The primary structure comprises 146 residues: Ribonuclease H (146 aa).

In terms of domain architecture, RNase H type-1 spans 1–143 (MQKKVTIYTD…CDYLATQAIK (143 aa)). Mg(2+) is bound by residues D10, E48, D70, and D135.

The protein belongs to the RNase H family. Monomer. Mg(2+) serves as cofactor.

The protein resides in the cytoplasm. The enzyme catalyses Endonucleolytic cleavage to 5'-phosphomonoester.. Functionally, endonuclease that specifically degrades the RNA of RNA-DNA hybrids. The sequence is that of Ribonuclease H from Chlorobium phaeobacteroides (strain BS1).